The chain runs to 341 residues: THO complex subunit 6 (341 aa).

WD repeat units follow at residues Arg-22–Ala-61, Ala-74–Glu-112, Leu-124–Arg-165, Gly-166–Thr-205, Ser-215–Ile-254, Pro-256–Val-293, and Gly-295–Leu-339. Ser-180 bears the Phosphoserine mark.

Belongs to the WD repeat THOC6 family. In terms of assembly, component of the THO subcomplex, which is composed of THOC1, THOC2, THOC3, THOC5, THOC6 and THOC7. The THO subcomplex interacts with DDX39B to form the THO-DDX39B complex which multimerizes into a 28-subunit tetrameric assembly. Component of the transcription/export (TREX) complex at least composed of ALYREF/THOC4, DDX39B, SARNP/CIP29, CHTOP and the THO subcomplex; in the complex interacts with THOC5; together with THOC5 and THOC7, plays a key structural role in the oligomerization of the THO-DDX39B complex. TREX seems to have a dynamic structure involving ATP-dependent remodeling.

The protein resides in the nucleus. It is found in the nucleus speckle. Component of the THO subcomplex of the TREX complex which is thought to couple mRNA transcription, processing and nuclear export, and which specifically associates with spliced mRNA and not with unspliced pre-mRNA. Plays a key structural role in the oligomerization of the THO-DDX39B complex. TREX is recruited to spliced mRNAs by a transcription-independent mechanism, binds to mRNA upstream of the exon-junction complex (EJC) and is recruited in a splicing- and cap-dependent manner to a region near the 5' end of the mRNA where it functions in mRNA export to the cytoplasm via the TAP/NXF1 pathway. Plays a role in apoptosis negative control involved in brain development. In terms of biological role, (Microbial infection) The TREX complex is essential for the export of Kaposi's sarcoma-associated herpesvirus (KSHV) intronless mRNAs and infectious virus production. The protein is THO complex subunit 6 (THOC6) of Homo sapiens (Human).